A 123-amino-acid polypeptide reads, in one-letter code: Large ribosomal subunit protein uL14 (123 aa).

This sequence belongs to the universal ribosomal protein uL14 family. In terms of assembly, part of the 50S ribosomal subunit. Forms a cluster with proteins L3 and L19. In the 70S ribosome, L14 and L19 interact and together make contacts with the 16S rRNA in bridges B5 and B8.

In terms of biological role, binds to 23S rRNA. Forms part of two intersubunit bridges in the 70S ribosome. In Erwinia tasmaniensis (strain DSM 17950 / CFBP 7177 / CIP 109463 / NCPPB 4357 / Et1/99), this protein is Large ribosomal subunit protein uL14.